The following is a 702-amino-acid chain: Protein sepa-1 (702 aa).

Residues 39–160 form a required for self-association and interaction with pgl-3 region; it reads RQRFCYEKTD…KESTSYGQFR (122 aa). Short sequence motifs (LIR) lie at residues 107–110, 247–250, and 298–301; these read FVEV, FQKI, and FGFV. Positions 450-471 are disordered; sequence AKDPEEPTTAASEGGNTYGYQE. The span at 458–468 shows a compositional bias: polar residues; the sequence is TAASEGGNTYG. Residues 469–472 carry the LIR 4 motif; that stretch reads YQEL. The stretch at 508-543 forms a coiled coil; sequence AAMDKKKKRRELKSRLNKINAQIDELEKRRMERAGK. The tract at residues 545-564 is disordered; that stretch reads QVVSSSVPSEEAAQVEAPAS. One can recognise a KIX domain in the interval 597–674; that stretch reads NTSKEWIVED…TVDQILKKTL (78 aa). A compositionally biased stretch (basic and acidic residues) spans 675 to 685; sequence KKDQRATEHNH. A disordered region spans residues 675-702; the sequence is KKDQRATEHNHQQPTQSSDELAKNHEKN.

As to quaternary structure, self-associates. Interacts (via the LIR motifs) with lgg-1; the interaction is direct. Interacts (via the LIR motifs) with lgg-2; the interaction is direct. Interacts with pgl-3; interaction is enhanced in the presence of RNA. Interacts with epg-2; may be modulated by prmt-1. Post-translationally, degraded by autophagy.

It localises to the nucleus. It is found in the cytoplasm. The protein resides in the cytoplasmic granule. Adapter protein that connects P-granules in somatic cells with the autophagic machinery. Association with other adapters such as epg-2 and P-granule components such as pgl-3 is required for the accumulation and degradation of P-granules by autophagy in somatic cells. This ensures exclusive localization of the P-granules in germ cells. In Caenorhabditis elegans, this protein is Protein sepa-1.